The sequence spans 137 residues: Large ribosomal subunit protein uL16 (137 aa).

The protein belongs to the universal ribosomal protein uL16 family. Part of the 50S ribosomal subunit.

Its function is as follows. Binds 23S rRNA and is also seen to make contacts with the A and possibly P site tRNAs. The polypeptide is Large ribosomal subunit protein uL16 (Rhodopseudomonas palustris (strain BisA53)).